Consider the following 213-residue polypeptide: MSRVSVPCHVKGTVALQVGDVRTSQGRPGVLVIDVTFPSVAPFELQEIMFKNYYTAFLSIRVRQHTSTHTPAKWVTCLRDYCLMPDPHSEEGAQEYVSLFKHQMLCDMARVLELRLILRQPSPLWLSFTVEELQIYQQGPKSPSMTFPKWLSHPVPCEQPAPLIEGLPDPNRVSSEVQQMWALTEMIRASHTSTRIGRFDVDGCYDLNLLSYT.

Part of the neuronal tubulin polyglutamylase complex which contains TPGS1, TPGS2, TTLL1, LRRC49 and NICN1.

The protein localises to the nucleus. The protein is Nicolin-1 (NICN1) of Canis lupus familiaris (Dog).